The sequence spans 1110 residues: MEYRCLDCTTGDTIAVDLKVFLDLKEFKSYLSNKWGVPRAQILLLYPFGIKLKDSNFRHASDLESPEIYVYDRRLFSLTNEPHTGADAHADSDADADADTADVEQQAAQLLDSLLEQRRHPQLQDDLIRPIPSPLEDLKIADGISHRTAVSMLTTNLGWLSALEIDVNYYSSISDKCKEDTQSLARCLGTCEQYLGLYCYDVERLYNSNVVFLDQLHENSLQSRWKECYKNTLTKLAGLNGYLSQYVDEAKQIEKEVTLKSLDGKVNSKLKQIKKELDSYADQRKSIQNEIENLKNIKDMKNDDNELHEMQKSFDSIADTVRKASRDILDKDDALFTDEYITQEVVPVMIDIQKKVKTLLTVSQALYENMHELLTHKRNFQIQIIVKLGQIAWIQLQISELKQYLLNDCNADLTLYKDLEVEFAQIEDYPLIYGLYLVEKYRRQVWKCGMAKNMISISNDIKERSAAELTTRKNWYKNFGELSKPFNEDLTKYNDLDEISKLMNSDSQFLKEKFIQDLRNEQRKLEDVIKSFIKNMHDLGLSKETTQVLEQSFKEASNSNICSQIDVTYDHRRINNENDLIKRYKIRIRKLESLLHEQGYSSISKWPSGVLNHTDRPNYFADNVSPAGRSLLVSSSALLGLEPSASLKTDAEMFDLKKEIGDLSEKVTALEKDNKLKTDQLKITHSKLIDIEVEKAAFRETLNHLNKELARLTVNEEDQTNLLKEERLRFKKEMTSVTVVNQNLMNNLDALQKTFEDVELENAHLKSKLKELQQRQDQLIEDSANEKLEIKSKYEKLIKEKDENMGQAFAVTNKAISGEQNKTESDIIHSSPYPEAILHLRTELFDIFSTNIYILENIGLLLTETSAGKFEIKRVKGLKKGLSQSLLDESAQISPIDGVINSVVYKNIRAQYEQLPNDNNISNCELFISSVKKIYENKLFESAVINRFKDIETLAKRLTKENKSKRILIDLYQNERLAVKDFRVNDLALFLPTKEALSETKSLSSSMASSFSSVDLSTPISGANNNITASRKSLHKPNVKHPWAAFTAFNESSRYFLKDENMVTDNKEWFIGKITDIQRQVVENISTNNPFKLPKDTVWYLISAEMISID.

Coiled coils occupy residues 264 to 309 and 651 to 803; these read GKVN…ELHE and AEMF…EKDE.

This sequence belongs to the ATG11 family. In terms of assembly, homodimer.

It is found in the preautophagosomal structure membrane. The protein localises to the vacuole membrane. Functionally, involved in cytoplasm to vacuole transport (Cvt), pexophagy, mitophagy and nucleophagy. Recruits mitochondria for their selective degradation via autophagy (mitophagy) during starvation. Works as scaffold proteins that recruit ATG proteins to the pre-autophagosome (PAS), the site of vesicle/autophagosome formation. Required for the Cvt vesicles completion. Contributes through its regulation of pexophagy to survival during engulfment by host phagocytic cells during infection. Through its function in autophagy, acts as an important virulence factor that supports the viability of C.glabrata in the phagosomal compartment of infected innate immune cells. The chain is Autophagy-related protein 11 (ATG11) from Candida glabrata (strain ATCC 2001 / BCRC 20586 / JCM 3761 / NBRC 0622 / NRRL Y-65 / CBS 138) (Yeast).